Consider the following 171-residue polypeptide: UPF0763 protein HPP12_0677 (171 aa).

It belongs to the UPF0763 family.

The chain is UPF0763 protein HPP12_0677 from Helicobacter pylori (strain P12).